The following is a 56-amino-acid chain: Bowman-Birk type proteinase inhibitor I-2B (56 aa).

Disulfide bonds link C10/C25, C15/C23, C32/C39, and C36/C51.

Belongs to the Bowman-Birk serine protease inhibitor family.

This Triticum aestivum (Wheat) protein is Bowman-Birk type proteinase inhibitor I-2B.